We begin with the raw amino-acid sequence, 122 residues long: Acidic phospholipase A2 homolog vipoxin A chain (122 aa).

7 disulfides stabilise this stretch: Cys26-Cys115, Cys28-Cys44, Cys43-Cys95, Cys49-Cys122, Cys50-Cys88, Cys57-Cys81, and Cys75-Cys86.

This sequence belongs to the phospholipase A2 family. Group II subfamily. D49 sub-subfamily. In terms of assembly, heterodimer of A and B (AC P14420) chains; non-covalently linked. The A chain (acidic) is non-toxic, and increases the toxicity of the B chain (basic). The A chain may act as factor stabilizing the complex structure and hence retaining its toxicity by preventing non-specific binding. Upon binding to the target membranes the A chain may dissociate. Expressed by the venom gland.

The protein localises to the secreted. Heterodimer: postsynaptic neurotoxin. Its function is as follows. Monomer: Acidic phospholipase A2 homolog that is non-toxic. This chain is Acidic phospholipase A2 homolog vipoxin A chain, found in Vipera ammodytes meridionalis (Eastern sand viper).